Reading from the N-terminus, the 233-residue chain is LexA repressor (233 aa).

A DNA-binding region (H-T-H motif) is located at residues Phe26–Thr46. Catalysis depends on for autocatalytic cleavage activity residues Ser154 and Lys192.

The protein belongs to the peptidase S24 family. In terms of assembly, homodimer.

It catalyses the reaction Hydrolysis of Ala-|-Gly bond in repressor LexA.. Functionally, represses a number of genes involved in the response to DNA damage (SOS response), including recA and lexA. In the presence of single-stranded DNA, RecA interacts with LexA causing an autocatalytic cleavage which disrupts the DNA-binding part of LexA, leading to derepression of the SOS regulon and eventually DNA repair. The protein is LexA repressor of Nitrobacter hamburgensis (strain DSM 10229 / NCIMB 13809 / X14).